Reading from the N-terminus, the 571-residue chain is OTU domain-containing protein 5 (571 aa).

2 disordered regions span residues 1-111 (MTIL…GPGG) and 146-175 (PGHS…GAGY). Positions 11 to 30 (PPDADPANEPPPPGPMPPAP) are enriched in pro residues. Residues 32 to 47 (RGGGVGVGGGGTGVGG) show a composition bias toward gly residues. Residues 63–75 (ASPPPQGPLPGPP) are compositionally biased toward pro residues. Position 64 is a phosphoserine (S64). Low complexity predominate over residues 84–97 (AVPPGAVAGPRPQQ). S165 carries the phosphoserine modification. Y175 carries the post-translational modification Phosphotyrosine. At S177 the chain carries Phosphoserine. Residue T195 is modified to Phosphothreonine. In terms of domain architecture, OTU spans 213–341 (FIIKQMKEDG…NIHYNSVVNP (129 aa)). Residues 218 to 224 (MKEDGAC) form a cys-loop region. D221 is a catalytic residue. The active-site Nucleophile is C224. A variable-loop region spans residues 273–283 (KRKNNCHGNHI). Position 328 is a phosphoserine; by MTOR (S328). Residues 329–334 (YHRNIH) are his-loop. H334 is a catalytic residue. 2 positions are modified to phosphoserine: S337 and S375. A disordered region spans residues 418 to 502 (ARQVRGPSQP…PGTSSQFSAG (85 aa)). Composition is skewed to low complexity over residues 430-443 (ASAT…AASS) and 450-462 (SRSP…ASSP). S452 carries the post-translational modification Phosphoserine. T507 bears the Phosphothreonine mark. Position 508 is a phosphoserine; by MTOR (S508).

It belongs to the peptidase C85 family. In terms of assembly, interacts with TRAF3. In terms of processing, phosphorylation at Ser-177 is required for deubiquitinating activity. Phosphorylation at Ser-328, Ser-337 and Ser-508 by MTOR promotes its activity. In terms of tissue distribution, expressed in various tissues, including the liver and placenta, as well as in peripheral blood leukocytes.

It is found in the nucleus. The enzyme catalyses Thiol-dependent hydrolysis of ester, thioester, amide, peptide and isopeptide bonds formed by the C-terminal Gly of ubiquitin (a 76-residue protein attached to proteins as an intracellular targeting signal).. Its activity is regulated as follows. Inhibited by N-ethyl-maleimide (NEM). Functionally, deubiquitinating enzyme that functions as a negative regulator of the innate immune system. Has peptidase activity towards 'Lys-48'- and 'Lys-63'-linked polyubiquitin chains. Can also cleave 'Lys-11'-linked ubiquitin chains (in vitro). Acts via TRAF3 deubiquitination and subsequent suppression of type I interferon (IFN) production. Controls neuroectodermal differentiation through cleaving 'Lys-48'-linked ubiquitin chains to counteract degradation of select chromatin regulators such as ARID1A, HDAC2 and HCF1. Acts as a positive regulator of mTORC1 and mTORC2 signaling following phosphorylation by MTOR: acts by mediating deubiquitination of BTRC, leading to its stability. This Homo sapiens (Human) protein is OTU domain-containing protein 5.